A 455-amino-acid polypeptide reads, in one-letter code: Glutamate--tRNA ligase (455 aa).

A 'HIGH' region motif is present at residues 8–18; sequence PSPTGYLHIGG. Residues 231–235 carry the 'KMSKS' region motif; it reads RLSKR. Lys-234 provides a ligand contact to ATP.

This sequence belongs to the class-I aminoacyl-tRNA synthetase family. Glutamate--tRNA ligase type 1 subfamily. Monomer.

Its subcellular location is the cytoplasm. It catalyses the reaction tRNA(Glu) + L-glutamate + ATP = L-glutamyl-tRNA(Glu) + AMP + diphosphate. Its function is as follows. Catalyzes the attachment of glutamate to tRNA(Glu) in a two-step reaction: glutamate is first activated by ATP to form Glu-AMP and then transferred to the acceptor end of tRNA(Glu). This is Glutamate--tRNA ligase from Vesicomyosocius okutanii subsp. Calyptogena okutanii (strain HA).